We begin with the raw amino-acid sequence, 266 residues long: DNA damage-regulated autophagy modulator protein 2 (266 aa).

6 consecutive transmembrane segments (helical) span residues 8-28 (LSFL…FSYI), 53-73 (KCLF…TIYV), 88-108 (IIKL…GLSI), 118-138 (FAAH…YMFV), 160-180 (LLLV…SSVL), and 207-227 (ITTA…LTYI).

It belongs to the DRAM/TMEM150 family. Expression is down-regulated in ovarian tumors (at protein level). Widely expressed with highest levels in placenta and heart. Expressed in the retina. Not detected in brain or thymus.

It localises to the lysosome membrane. It is found in the photoreceptor inner segment. Its subcellular location is the apical cell membrane. Plays a role in the initiation of autophagy. In the retina, might be involved in the process of photoreceptor cells renewal and recycling to preserve visual function. Induces apoptotic cell death when coexpressed with DRAM1. The protein is DNA damage-regulated autophagy modulator protein 2 (DRAM2) of Homo sapiens (Human).